Here is a 1380-residue protein sequence, read N- to C-terminus: Carboxypeptidase D (1380 aa).

Residues 1-31 (MASGRDERPPWRLGRLLLLMCLLLLGSSARA) form the signal peptide. The Extracellular segment spans residues 32 to 1299 (AHIKKAEATT…DNRIFGLPRE (1268 aa)). A Peptidase M14 1 domain is found at 57–380 (RYYHEEELES…ESLITLIEKV (324 aa)). Positions 139 and 142 each coordinate Zn(2+). The short motif at 162 to 164 (RGD) is the Cell attachment site element. N-linked (GlcNAc...) asparagine glycosylation occurs at Asn-172. The interval 190–232 (AREGDCGFGDGGPSGASGRDNSRGRDLNRSFPDQFSTGEPPAL) is disordered. Gly residues predominate over residues 195-204 (CGFGDGGPSG). Residue Asn-217 is glycosylated (N-linked (GlcNAc...) asparagine). His-257 lines the Zn(2+) pocket. At Tyr-265 the chain carries Phosphotyrosine. At Ser-270 the chain carries Phosphoserine. Glu-350 serves as the catalytic Proton donor/acceptor. Asn-399, Asn-410, Asn-429, and Asn-522 each carry an N-linked (GlcNAc...) asparagine glycan. The 291-residue stretch at 502–792 (HHHHFPDMEI…RSLIQFMKQV (291 aa)) folds into the Peptidase M14 2 domain. Positions 564 and 567 each coordinate Zn(2+). Asn-626 carries an N-linked (GlcNAc...) asparagine glycan. His-671 is a binding site for Zn(2+). Residue Glu-762 is the Proton donor/acceptor of the active site. Asn-811, Asn-855, Asn-867, and Asn-879 each carry an N-linked (GlcNAc...) asparagine glycan. The disordered stretch occupies residues 874 to 899 (STDSNNESKKGKGASSSTNDASDPTT). A compositionally biased stretch (polar residues) spans 887–897 (ASSSTNDASDP). The Peptidase M14 3 domain maps to 932–1211 (RYHSYKDLSE…RSLLSMLVEV (280 aa)). 4 N-linked (GlcNAc...) asparagine glycosylation sites follow: Asn-955, Asn-978, Asn-1070, and Asn-1142. Residues 1300–1320 (LVVTVSGATMSALILTACIIW) traverse the membrane as a helical segment. Residues Cys-1317, Cys-1321, and Cys-1323 are each lipidated (S-palmitoyl cysteine). Topologically, residues 1321–1380 (CICSIKSNRHKDGFHRLRQHHDEYEDEIRMMSTGSKKSLLSHEFQDETDTEEETLYSSKH) are cytoplasmic. Residues Ser-1358 and Ser-1361 each carry the phosphoserine modification. The segment at 1359 to 1380 (LLSHEFQDETDTEEETLYSSKH) is disordered. Phosphothreonine is present on residues Thr-1368 and Thr-1370.

It belongs to the peptidase M14 family. Requires Zn(2+) as cofactor. Highly expressed in placenta, pancreas and hepatoma cells. Lower levels found in skeletal muscle, heart and colon carcinoma and melanoma cell lines.

It is found in the cell membrane. It catalyses the reaction Releases C-terminal Arg and Lys from polypeptides.. This Homo sapiens (Human) protein is Carboxypeptidase D (CPD).